A 146-amino-acid chain; its full sequence is NADPH-dependent 7-cyano-7-deazaguanine reductase (146 aa).

Residue C48 is the Thioimide intermediate of the active site. D55 serves as the catalytic Proton donor. Residues 70-72 (VES) and 89-90 (HE) each bind substrate.

This sequence belongs to the GTP cyclohydrolase I family. QueF type 1 subfamily.

The protein resides in the cytoplasm. The enzyme catalyses 7-aminomethyl-7-carbaguanine + 2 NADP(+) = 7-cyano-7-deazaguanine + 2 NADPH + 3 H(+). Its pathway is tRNA modification; tRNA-queuosine biosynthesis. Functionally, catalyzes the NADPH-dependent reduction of 7-cyano-7-deazaguanine (preQ0) to 7-aminomethyl-7-deazaguanine (preQ1). This chain is NADPH-dependent 7-cyano-7-deazaguanine reductase, found in Helicobacter pylori (strain Shi470).